We begin with the raw amino-acid sequence, 299 residues long: MRIKRTSNRSNAARRVRTTAVLAGLAAVAALAVPTANAETPRTFSANQLTAASDAVLGADIAGTAWNIDPQSKRLVVTVDSTVSKAEINQIKKSAGANADALRIERTPGKFTKLISGGDAIYSSTGRCSLGFNVRSGSTYYFLTAGHCTDGATTWWANSARTTVLGTTSGSSFPNNDYGIVRYTNTTIPKDGTVGGQDITSAANATVGMAVTRRGSTTGTHSGSVTALNATVNYGGGDVVYGMIRTNVCAEPGDSGGPLYSGTRAIGLTSGGSGNCSSGGTTFFQPVTEALSAYGVSVY.

The N-terminal stretch at 1 to 38 (MRIKRTSNRSNAARRVRTTAVLAGLAAVAALAVPTANA) is a signal peptide. A propeptide spanning residues 39–114 (ETPRTFSANQ…ERTPGKFTKL (76 aa)) is cleaved from the precursor. A disulfide bond links Cys128 and Cys148. Active-site charge relay system residues include His147, Asp177, and Ser255. A disulfide bond links Cys249 and Cys276.

Belongs to the peptidase S1 family. Monomer.

It catalyses the reaction Hydrolysis of proteins with trypsin-like specificity.. Has a primary specificity for large aliphatic or aromatic amino acids. This Streptomyces griseus protein is Streptogrisin-B (sprB).